We begin with the raw amino-acid sequence, 670 residues long: Protein phosphatase 1 regulatory subunit 15A (670 aa).

The Cytoplasmic segment spans residues 1–21; sequence MAPGQMPHQPAPWRGTHPLFL. Residues 1-60 form a required for localization in the endoplasmic reticulum region; the sequence is MAPGQMPHQPAPWRGTHPLFLLSPLMGLLSRAWSLLRAPGPPEPWLVEAVTEADQGGAGL. The segment at residues 22-39 is an intramembrane region (helical); it reads LSPLMGLLSRAWSLLRAP. Over 40–670 the chain is Cytoplasmic; it reads GPPEPWLVEA…PSLDLSGRRG (631 aa). 3 disordered regions span residues 76-144, 159-178, and 191-501; these read GRHP…GQPA, PGEEESKEEAVTGGGGNEVT, and PGEE…EKWG. The segment covering 78–87 has biased composition (basic and acidic residues); the sequence is HPQEETKDSG. The span at 191–202 shows a compositional bias: acidic residues; sequence PGEEEEEEEENG. Basic and acidic residues predominate over residues 254-265; sequence KDKQAEKGDADP. Positions 271–288 are enriched in polar residues; the sequence is SLAQRPSLRTWQHPSSAI. Residues 289–299 are compositionally biased toward acidic residues; sequence TEEEEDRDSEE. Polar residues predominate over residues 302-312; the sequence is ASSSVPLTSAF. 2 stretches are compositionally biased toward acidic residues: residues 321–344 and 367–385; these read EDTEEEDEEEEDCDSEATEDEGEA and DTEEEEDCDSEATEDEGEA. 4 consecutive repeat copies span residues 355–381, 396–426, 436–462, and 478–511. Residues 355–511 are 4 X 34 AA approximate repeats; that stretch reads AFLSAWVYRP…EAESCPFRVA (157 aa). Residues 355–511 form an interaction with SMAD7 region; that stretch reads AFLSAWVYRP…EAESCPFRVA (157 aa). Positions 388–397 are enriched in polar residues; the sequence is SSATPPTSAF. Y403 carries the phosphotyrosine modification. A compositionally biased stretch (acidic residues) spans 407–425; that stretch reads DTEEEEDCDSEATEDEGEA. Y443 is subject to Phosphotyrosine. Residues 448-461 are compositionally biased toward acidic residues; the sequence is DTEEEDEYEDEDNE. Positions 484–556 are interaction with KMT2A/MLL1; it reads IYQPGEKTDG…DLERLLKTRK (73 aa). Positions 489–501 are enriched in basic and acidic residues; sequence EKTDGGEAAEKWG. Y513 is modified (phosphotyrosine). The interaction with SMARCB1 stretch occupies residues 537–584; the sequence is KSAQTPTRHQDLERLLKTRKVRFSEKVSIHPLVVWAGPAQAARRGPWE. A disordered region spans residues 622-670; the sequence is NPPTSLATVPAPTQTSPMTPIQATPLSHALASPSPPCVSPSLDLSGRRG. Over residues 623-645 the composition is skewed to polar residues; sequence PPTSLATVPAPTQTSPMTPIQAT.

Belongs to the PPP1R15 family. In terms of assembly, interacts with PPP1CA. Interacts with EIF2S1. Interacts with PCNA. Interacts with LYN and KMT2A/MLL1. Interacts with PPP1R1A and SMARCB1. Interacts with SMAD7. Interacts with BAG1. Interacts with NOX4. Phosphorylated on tyrosine by LYN; which impairs its antiproliferative activity. In terms of processing, polyubiquitinated. Exhibits a rapid proteasomal degradation with a half-life under 1 hour, ubiquitination depends on endoplasmic reticulum association.

Its subcellular location is the endoplasmic reticulum membrane. The protein localises to the mitochondrion outer membrane. Functionally, recruits the serine/threonine-protein phosphatase PPP1CA to prevents excessive phosphorylation of the translation initiation factor eIF-2A/EIF2S1, thereby reversing the shut-off of protein synthesis initiated by stress-inducible kinases and facilitating recovery of cells from stress. Down-regulates the TGF-beta signaling pathway by promoting dephosphorylation of TGFB1 by PP1. May promote apoptosis by inducing TP53 phosphorylation on 'Ser-15'. Plays an essential role in autophagy by tuning translation during starvation, thus enabling lysosomal biogenesis and a sustained autophagic flux. The chain is Protein phosphatase 1 regulatory subunit 15A (PPP1R15A) from Bos taurus (Bovine).